The sequence spans 246 residues: Acetoacetate decarboxylase (246 aa).

Lys116 serves as the catalytic Schiff-base intermediate with acetoacetate.

Belongs to the ADC family.

It catalyses the reaction acetoacetate + H(+) = acetone + CO2. Functionally, catalyzes the conversion of acetoacetate to acetone and carbon dioxide. In Burkholderia lata (strain ATCC 17760 / DSM 23089 / LMG 22485 / NCIMB 9086 / R18194 / 383), this protein is Acetoacetate decarboxylase.